The following is a 163-amino-acid chain: Halocyanin (163 aa).

An N-terminal signal peptide occupies residues 1–24; the sequence is MKDISRRRFVLGTGATVAAATLAG. Cysteine 25 is subject to N-acetylcysteine. The S-archaeol cysteine moiety is linked to residue cysteine 25. A compositionally biased stretch (gly residues) spans 26-38; sequence NGNGNGNGNGNGN. Positions 26 to 48 are disordered; that stretch reads NGNGNGNGNGNGNGEPDTPEGRA. The region spanning 48–163 is the Plastocyanin-like domain; sequence ADQFLTDNDA…QGMYGAVIVE (116 aa). Positions 110, 148, 151, and 156 each coordinate Cu cation.

It localises to the cell membrane. In terms of biological role, electron donor. Binds one copper ion. The sequence is that of Halocyanin (hcy) from Natronomonas pharaonis (Natronobacterium pharaonis).